The following is a 193-amino-acid chain: Oligoribonuclease (193 aa).

The Exonuclease domain maps to 14-177 (LIWIDLEMTG…SDIYDSIAEL (164 aa)). Tyr135 is a catalytic residue.

This sequence belongs to the oligoribonuclease family.

Its subcellular location is the cytoplasm. Functionally, 3'-to-5' exoribonuclease specific for small oligoribonucleotides. The polypeptide is Oligoribonuclease (Xylella fastidiosa (strain Temecula1 / ATCC 700964)).